The following is a 1282-amino-acid chain: Clustered mitochondria protein homolog (1282 aa).

The tract at residues 1–43 (MEQNNGTTEHPKEVLDQTNPSNEVTGVPNGNHAEGEGDQNAGE) is disordered. Residues 341-585 (DITRPQENYL…RITPLDVLWY (245 aa)) enclose the Clu domain. Basic and acidic residues-rich tracts occupy residues 631 to 641 (EAEEKAEESKP) and 653 to 669 (ESEKKETTSPDQERVDI). Disordered stretches follow at residues 631-669 (EAEEKAEESKPNGEAADASENAESEKKETTSPDQERVDI) and 892-936 (RSQL…PAPA). Over residues 924–936 (QASPRPAQSPAPA) the composition is skewed to low complexity. Residues 1003-1036 (AKLYHQLSMLYYQSDDKDAAVELARKAVIVTERT) form a TPR repeat. The disordered stretch occupies residues 1202 to 1282 (ANLPTRLGTK…SKQSTVKPSS (81 aa)). The span at 1212-1223 (PQPQVGQTTSEM) shows a compositional bias: polar residues. Positions 1257-1272 (TKQKKRAAARNPKLRG) are enriched in basic residues. Over residues 1273-1282 (SKQSTVKPSS) the composition is skewed to polar residues.

Belongs to the CLU family. As to quaternary structure, may associate with the eukaryotic translation initiation factor 3 (eIF-3) complex.

It is found in the cytoplasm. MRNA-binding protein involved in proper cytoplasmic distribution of mitochondria. This Coccidioides immitis (strain RS) (Valley fever fungus) protein is Clustered mitochondria protein homolog.